We begin with the raw amino-acid sequence, 189 residues long: UPF0398 protein LVIS_0849 (189 aa).

It belongs to the UPF0398 family.

The polypeptide is UPF0398 protein LVIS_0849 (Levilactobacillus brevis (strain ATCC 367 / BCRC 12310 / CIP 105137 / JCM 1170 / LMG 11437 / NCIMB 947 / NCTC 947) (Lactobacillus brevis)).